The primary structure comprises 594 residues: MSAILSADDLNDFISPGVACIKPVTQPKSELNPQHVDSSSTISETGEVEIQIDSQGNPLEISQIDTKINKADPSSTALTPAQISLADCLACSGCITSAEEVLVAQHSHHELLKAMEESSLASGTEKVFVASISQQLRASLAMAYDMSIEEMDKLLINLFVNQMGFQYVVGTSLGRKLSLINESQGMIHRKEEGKTIGENLKNPVLSSICPGWVLYAEKTHPYVLPYISTVKSAQQITGCLLKNLTAYERGIGKSKVYHLTIMPCFDKKLESARPELFANHDGADNVPDVDCVLTARELVTLIDESLGKYQLVPKVIPQTLLRKDIAEVYKSAAPTNWPFVQYSWSNDPGSSSGGYAYTYLRLFQEQLITTQNYRPEDFSMKVLQGKNTDVYEMRLLHNGNQVASSAIVNGFRNIQNLVRKLKPGNNNNKVGGLAIKVNPLVARRRARMSKSEDSSGASASSMAPAEIADPSKVDYVEIMACPQGCINGGGQIAAPAPTSTPPAAPAPAHAATSTTDVKIAVVLNKDWVSEVLMKYNSVPMFDLSLHPEEIAGFIQWSQEFEKEFDVSEQRLFKTHFNEIEKPTDATAIMVGSKW.

[4Fe-4S] cluster contacts are provided by cysteine 20, cysteine 88, cysteine 91, cysteine 94, cysteine 209, and cysteine 264. A disordered region spans residues 444–465 (RRARMSKSEDSSGASASSMAPA). Residues 454 to 465 (SSGASASSMAPA) are compositionally biased toward low complexity. [4Fe-4S] cluster is bound by residues cysteine 481 and cysteine 485. The disordered stretch occupies residues 492-511 (IAAPAPTSTPPAAPAPAHAA).

The protein belongs to the NARF family.

Component of the cytosolic Fe/S protein assembly machinery. Required for maturation of extramitochondrial Fe/S proteins. May play a role in the transfer of pre-assembled Fe/S clusters to target apoproteins. This chain is Cytosolic Fe-S cluster assembly factor NAR1 (NAR1), found in Lodderomyces elongisporus (strain ATCC 11503 / CBS 2605 / JCM 1781 / NBRC 1676 / NRRL YB-4239) (Yeast).